Reading from the N-terminus, the 140-residue chain is Type II secretion system core protein G (140 aa).

Residues 1-6 (MQRQRG) constitute a propeptide, leader sequence. F7 carries the N-methylphenylalanine modification. A helical membrane pass occupies residues 7–27 (FTLLEIMVVIVILGVLASLVV). The segment at 120-140 (LGPDGVPESNDDIGNWTIGKK) is disordered.

The protein belongs to the GSP G family. Type II secretion system is composed of four main components: the outer membrane complex, the inner membrane complex, the cytoplasmic secretion ATPase and the periplasm-spanning pseudopilus. Forms homomultimers. Post-translationally, cleaved by the prepilin peptidase. In terms of processing, methylated by prepilin peptidase at the amino group of the N-terminal phenylalanine once the leader sequence is cleaved.

It localises to the cell inner membrane. Its function is as follows. Core component of the type II secretion system required for the energy-dependent secretion of extracellular factors such as proteases and toxins from the periplasm. Pseudopilin (pilin-like) protein that polymerizes to form the pseudopilus. Further polymerization triggers pseudopilus growth. The sequence is that of Type II secretion system core protein G (pulG) from Klebsiella pneumoniae.